The following is a 350-amino-acid chain: Anthranilate phosphoribosyltransferase (350 aa).

5-phospho-alpha-D-ribose 1-diphosphate is bound by residues Gly94, 97–98 (GD), Thr102, 104–107 (NVST), 122–130 (KHGNRSVSS), and Ser134. Anthranilate is bound at residue Gly94. Ser106 is a binding site for Mg(2+). Asn125 is an anthranilate binding site. Arg180 is an anthranilate binding site. Mg(2+)-binding residues include Asp239 and Glu240.

It belongs to the anthranilate phosphoribosyltransferase family. Homodimer. Mg(2+) serves as cofactor.

It carries out the reaction N-(5-phospho-beta-D-ribosyl)anthranilate + diphosphate = 5-phospho-alpha-D-ribose 1-diphosphate + anthranilate. It functions in the pathway amino-acid biosynthesis; L-tryptophan biosynthesis; L-tryptophan from chorismate: step 2/5. In terms of biological role, catalyzes the transfer of the phosphoribosyl group of 5-phosphorylribose-1-pyrophosphate (PRPP) to anthranilate to yield N-(5'-phosphoribosyl)-anthranilate (PRA). The protein is Anthranilate phosphoribosyltransferase of Pelobacter propionicus (strain DSM 2379 / NBRC 103807 / OttBd1).